We begin with the raw amino-acid sequence, 578 residues long: XK-related protein 6 (578 aa).

7 consecutive transmembrane segments (helical) span residues 86–106 (WIVLALLVFFWDVGTDLWLAV), 114–134 (FLWSGLTLFFVLVPSVLVQIL), 253–273 (WLQCVSALSSLLSLAWVLASY), 307–327 (VLSLALFASVFHIYFGIFVVL), 348–368 (WEEVLFNMVVGVVYVFCWFNV), 377–397 (MVAYYVVVLLENVILTSLWYA), and 410–430 (LALCGVFLCFASGVACMVLYY).

The protein belongs to the XK family.

It is found in the cell membrane. This Tetraodon nigroviridis (Spotted green pufferfish) protein is XK-related protein 6 (xkr6).